The primary structure comprises 276 residues: Large ribosomal subunit protein uL2 (276 aa).

The interval 224–276 (AMNPIDHPHGGGEGKTSGGRNPVTPWGVPTKGKKTRKRNKSSNKYIKRVSDKG) is disordered. A compositionally biased stretch (basic residues) spans 254 to 270 (KGKKTRKRNKSSNKYIK).

It belongs to the universal ribosomal protein uL2 family. Part of the 50S ribosomal subunit. Forms a bridge to the 30S subunit in the 70S ribosome.

Functionally, one of the primary rRNA binding proteins. Required for association of the 30S and 50S subunits to form the 70S ribosome, for tRNA binding and peptide bond formation. It has been suggested to have peptidyltransferase activity; this is somewhat controversial. Makes several contacts with the 16S rRNA in the 70S ribosome. This is Large ribosomal subunit protein uL2 from Ehrlichia chaffeensis (strain ATCC CRL-10679 / Arkansas).